Reading from the N-terminus, the 279-residue chain is Energy-coupling factor transporter ATP-binding protein EcfA1 (279 aa).

The ABC transporter domain occupies 5 to 240 (IELKKVTFNY…GDELLQLGLD (236 aa)). ATP is bound at residue 40-47 (GHNGSGKS).

Belongs to the ABC transporter superfamily. Energy-coupling factor EcfA family. As to quaternary structure, forms a stable energy-coupling factor (ECF) transporter complex composed of 2 membrane-embedded substrate-binding proteins (S component), 2 ATP-binding proteins (A component) and 2 transmembrane proteins (T component).

Its subcellular location is the cell membrane. Its function is as follows. ATP-binding (A) component of a common energy-coupling factor (ECF) ABC-transporter complex. Unlike classic ABC transporters this ECF transporter provides the energy necessary to transport a number of different substrates. In Streptococcus pyogenes serotype M28 (strain MGAS6180), this protein is Energy-coupling factor transporter ATP-binding protein EcfA1.